Consider the following 265-residue polypeptide: Glutamate racemase (265 aa).

Substrate-binding positions include 9-10 (DS) and 41-42 (YS). Catalysis depends on cysteine 73, which acts as the Proton donor/acceptor. Residue 74–75 (NT) participates in substrate binding. The Proton donor/acceptor role is filled by cysteine 184. 185–186 (TH) contacts substrate.

This sequence belongs to the aspartate/glutamate racemases family.

The enzyme catalyses L-glutamate = D-glutamate. It participates in cell wall biogenesis; peptidoglycan biosynthesis. In terms of biological role, provides the (R)-glutamate required for cell wall biosynthesis. This chain is Glutamate racemase, found in Actinobacillus pleuropneumoniae serotype 3 (strain JL03).